The chain runs to 335 residues: Pyruvate dehydrogenase E1 component subunit beta (335 aa).

Glu60 provides a ligand contact to thiamine diphosphate. Residues Ala161, Ile162, and Asn166 each coordinate K(+).

As to quaternary structure, heterodimer of an alpha and a beta chain. Requires thiamine diphosphate as cofactor.

Its subcellular location is the plastid. The protein resides in the chloroplast. It catalyses the reaction N(6)-[(R)-lipoyl]-L-lysyl-[protein] + pyruvate + H(+) = N(6)-[(R)-S(8)-acetyldihydrolipoyl]-L-lysyl-[protein] + CO2. Its function is as follows. The pyruvate dehydrogenase complex catalyzes the overall conversion of pyruvate to acetyl-CoA and CO(2). It contains multiple copies of three enzymatic components: pyruvate dehydrogenase (E1), dihydrolipoamide acetyltransferase (E2) and lipoamide dehydrogenase (E3). The chain is Pyruvate dehydrogenase E1 component subunit beta (pdhB) from Chlorokybus atmophyticus (Soil alga).